The primary structure comprises 564 residues: Eukaryotic translation initiation factor 3 subunit L (564 aa).

Residue S2 is modified to N-acetylserine. The PCI domain occupies 331-537 (DAIRVFANIL…IHIADTKVAR (207 aa)). N6-acetyllysine is present on residues K465 and K549.

It belongs to the eIF-3 subunit L family. In terms of assembly, component of the eukaryotic translation initiation factor 3 (eIF-3) complex, which is composed of 13 subunits: EIF3A, EIF3B, EIF3C, EIF3D, EIF3E, EIF3F, EIF3G, EIF3H, EIF3I, EIF3J, EIF3K, EIF3L and EIF3M. The eIF-3 complex appears to include 3 stable modules: module A is composed of EIF3A, EIF3B, EIF3G and EIF3I; module B is composed of EIF3F, EIF3H, and EIF3M; and module C is composed of EIF3C, EIF3D, EIF3E, EIF3K and EIF3L. EIF3C of module C binds EIF3B of module A and EIF3H of module B, thereby linking the three modules. EIF3J is a labile subunit that binds to the eIF-3 complex via EIF3B. The eIF-3 complex may interact with RPS6KB1 under conditions of nutrient depletion. Mitogenic stimulation may lead to binding and activation of a complex composed of MTOR and RPTOR, leading to phosphorylation and release of RPS6KB1 and binding of EIF4B to eIF-3. Interacts with RRN3.

It is found in the cytoplasm. Functionally, component of the eukaryotic translation initiation factor 3 (eIF-3) complex, which is required for several steps in the initiation of protein synthesis. The eIF-3 complex associates with the 40S ribosome and facilitates the recruitment of eIF-1, eIF-1A, eIF-2:GTP:methionyl-tRNAi and eIF-5 to form the 43S pre-initiation complex (43S PIC). The eIF-3 complex stimulates mRNA recruitment to the 43S PIC and scanning of the mRNA for AUG recognition. The eIF-3 complex is also required for disassembly and recycling of post-termination ribosomal complexes and subsequently prevents premature joining of the 40S and 60S ribosomal subunits prior to initiation. The eIF-3 complex specifically targets and initiates translation of a subset of mRNAs involved in cell proliferation, including cell cycling, differentiation and apoptosis, and uses different modes of RNA stem-loop binding to exert either translational activation or repression. In Mus musculus (Mouse), this protein is Eukaryotic translation initiation factor 3 subunit L (Eif3l).